The chain runs to 285 residues: Diaminopimelate epimerase (285 aa).

Substrate is bound by residues N14 and N67. The active-site Proton donor is the C76. Substrate is bound by residues 77 to 78 (GN), N166, N199, and 217 to 218 (ER). C226 serves as the catalytic Proton acceptor. 227–228 (GT) is a binding site for substrate.

The protein belongs to the diaminopimelate epimerase family. As to quaternary structure, homodimer.

The protein localises to the cytoplasm. The catalysed reaction is (2S,6S)-2,6-diaminopimelate = meso-2,6-diaminopimelate. It participates in amino-acid biosynthesis; L-lysine biosynthesis via DAP pathway; DL-2,6-diaminopimelate from LL-2,6-diaminopimelate: step 1/1. Functionally, catalyzes the stereoinversion of LL-2,6-diaminopimelate (L,L-DAP) to meso-diaminopimelate (meso-DAP), a precursor of L-lysine and an essential component of the bacterial peptidoglycan. The polypeptide is Diaminopimelate epimerase (Bacillus licheniformis (strain ATCC 14580 / DSM 13 / JCM 2505 / CCUG 7422 / NBRC 12200 / NCIMB 9375 / NCTC 10341 / NRRL NRS-1264 / Gibson 46)).